The chain runs to 502 residues: Lysine--tRNA ligase (502 aa).

2 residues coordinate Mg(2+): glutamate 399 and glutamate 406.

Belongs to the class-II aminoacyl-tRNA synthetase family. In terms of assembly, homodimer. The cofactor is Mg(2+).

It localises to the cytoplasm. The enzyme catalyses tRNA(Lys) + L-lysine + ATP = L-lysyl-tRNA(Lys) + AMP + diphosphate. The protein is Lysine--tRNA ligase of Synechococcus sp. (strain RCC307).